The following is a 333-amino-acid chain: Ribosomal RNA large subunit methyltransferase F (333 aa).

Positions 1 to 10 (MPQPPKRPRK) are enriched in basic residues. The interval 1 to 31 (MPQPPKRPRKPAPAAVKTAPAKGELHPRNRH) is disordered. The segment covering 12–22 (APAAVKTAPAK) has biased composition (low complexity).

It belongs to the methyltransferase superfamily. METTL16/RlmF family.

Its subcellular location is the cytoplasm. It carries out the reaction adenosine(1618) in 23S rRNA + S-adenosyl-L-methionine = N(6)-methyladenosine(1618) in 23S rRNA + S-adenosyl-L-homocysteine + H(+). Specifically methylates the adenine in position 1618 of 23S rRNA. The sequence is that of Ribosomal RNA large subunit methyltransferase F from Ectopseudomonas mendocina (strain ymp) (Pseudomonas mendocina).